A 304-amino-acid polypeptide reads, in one-letter code: Sulfate adenylyltransferase subunit 2 (304 aa).

Belongs to the PAPS reductase family. CysD subfamily. Heterodimer composed of CysD, the smaller subunit, and CysN.

The enzyme catalyses sulfate + ATP + H(+) = adenosine 5'-phosphosulfate + diphosphate. It participates in sulfur metabolism; hydrogen sulfide biosynthesis; sulfite from sulfate: step 1/3. Functionally, with CysN forms the ATP sulfurylase (ATPS) that catalyzes the adenylation of sulfate producing adenosine 5'-phosphosulfate (APS) and diphosphate, the first enzymatic step in sulfur assimilation pathway. APS synthesis involves the formation of a high-energy phosphoric-sulfuric acid anhydride bond driven by GTP hydrolysis by CysN coupled to ATP hydrolysis by CysD. The chain is Sulfate adenylyltransferase subunit 2 from Acinetobacter baumannii (strain SDF).